Here is a 130-residue protein sequence, read N- to C-terminus: Large ribosomal subunit protein bL21 (130 aa).

The interval 110 to 130 is disordered; that stretch reads TAPTATEETADATPDTETAAE.

This sequence belongs to the bacterial ribosomal protein bL21 family. As to quaternary structure, part of the 50S ribosomal subunit. Contacts protein L20.

Its function is as follows. This protein binds to 23S rRNA in the presence of protein L20. The chain is Large ribosomal subunit protein bL21 from Nostoc sp. (strain PCC 7120 / SAG 25.82 / UTEX 2576).